The primary structure comprises 420 residues: Phospholipase A1-II 3 (420 aa).

The first 21 residues, 1-21, serve as a signal peptide directing secretion; sequence MCCFLLVSVLLATTLTDVASA. A glycan (N-linked (GlcNAc...) asparagine) is linked at Asn231. Ser240 (acyl-ester intermediate) is an active-site residue. Ser240 (charge relay system) is an active-site residue. An N-linked (GlcNAc...) asparagine glycan is attached at Asn294. Catalysis depends on charge relay system residues Asp305 and His343. Residues 367–388 adopt a coiled-coil conformation; sequence VVDRDLALVNKEVDALRDEYQV. An N-linked (GlcNAc...) asparagine glycan is attached at Asn403.

The protein belongs to the AB hydrolase superfamily. Lipase family.

Its subcellular location is the secreted. Functionally, acylhydrolase that catalyzes the hydrolysis of phospholipids at the sn-1 position. The sequence is that of Phospholipase A1-II 3 from Oryza sativa subsp. japonica (Rice).